We begin with the raw amino-acid sequence, 3515 residues long: Microtubule-actin cross-linking factor 1, isoforms 6/7 (3515 aa).

Disordered regions lie at residues 1–23, 108–136, 155–196, 965–1178, 1217–1298, 1710–1730, and 3078–3108; these read MGKPLSRPDCLRRNPSCLGKGEE, VQKSAPVPPRRRPNAERKDNVNRRSWKSF, VSEA…TLEH, TEED…AVPT, SPAA…SPAA, EELATSGGQSPTGEQIPQFQQ, and PTHAPFIEKSRSGGRKSLSQPTPPPMPILSQ. Residues 120-129 are compositionally biased toward basic and acidic residues; the sequence is PNAERKDNVN. The tract at residues 157–245 is 13 X 13 AA approximate tandem repeat of P-T-S-P-A-A-A-V-P-T-P-E-E; it reads EAGASNPSLQ…ESEAVATSGN (89 aa). Low complexity-rich tracts occupy residues 995–1031 and 1040–1139; these read STPEEPASPAAAVPTPEEPTSPAAAVPTPEEPTSPAA and TSPA…AVPT. 13 tandem repeats follow at residues 1012 to 1024, 1026 to 1037, 1038 to 1051, 1052 to 1064, 1065 to 1077, 1078 to 1090, 1091 to 1103, 1104 to 1116, 1117 to 1129, 1130 to 1142, 1143 to 1155, 1156 to 1168, and 1169 to 1178. Residues 1140–1151 are compositionally biased toward pro residues; the sequence is PEEPAFPAPAVP. Low complexity-rich tracts occupy residues 1162–1178 and 1268–1298; these read AVPTPEESASPAAAVPT and SSPAASVPTPEEPASPAAAVSNLEEPASPAA. Over residues 1715–1730 the composition is skewed to polar residues; that stretch reads SGGQSPTGEQIPQFQQ. 2 consecutive EF-hand domains span residues 3168–3203 and 3204–3239; these read HKKSRVMDFFRRIDKDQDGKITRQEFIDGILASKFP and TTKLEMTAVADIFDRDGDGYIDYYEFVAALHPNKDA. The Ca(2+) site is built by aspartate 3181, aspartate 3183, aspartate 3185, lysine 3187, glutamate 3192, aspartate 3217, aspartate 3219, aspartate 3221, tyrosine 3223, and glutamate 3228. The region spanning 3244–3316 is the GAR domain; that stretch reads TDADKIEDEV…EFLVKNDPCR (73 aa). The disordered stretch occupies residues 3332 to 3515; the sequence is PEGASQGMTP…ASPRTPGPKR (184 aa). Positions 3352–3386 are enriched in low complexity; that stretch reads SSRAASPTRSSSSASQSNHSCTSMPSSPATPASGT. Positions 3402-3426 are enriched in polar residues; it reads TFHSSRTSLAGDTSNSSSPASTGAK. A compositionally biased stretch (low complexity) spans 3437 to 3451; it reads SRPGSRAGSRAGSRA. Polar residues predominate over residues 3466–3488; it reads ETQSACSDTSESSAAGGQGNSRR.

It localises to the cytoplasm. It is found in the cytoskeleton. The protein is Microtubule-actin cross-linking factor 1, isoforms 6/7 of Homo sapiens (Human).